A 348-amino-acid polypeptide reads, in one-letter code: Flagellar P-ring protein (348 aa).

A signal peptide spans 1-16 (MRIFLLCLALSLSVFA).

This sequence belongs to the FlgI family. In terms of assembly, the basal body constitutes a major portion of the flagellar organelle and consists of four rings (L,P,S, and M) mounted on a central rod.

It is found in the periplasm. It localises to the bacterial flagellum basal body. Assembles around the rod to form the L-ring and probably protects the motor/basal body from shearing forces during rotation. In Campylobacter lari (strain RM2100 / D67 / ATCC BAA-1060), this protein is Flagellar P-ring protein.